Consider the following 185-residue polypeptide: Ribosome-recycling factor (185 aa).

Belongs to the RRF family.

The protein localises to the cytoplasm. In terms of biological role, responsible for the release of ribosomes from messenger RNA at the termination of protein biosynthesis. May increase the efficiency of translation by recycling ribosomes from one round of translation to another. This chain is Ribosome-recycling factor, found in Pseudomonas aeruginosa (strain LESB58).